The chain runs to 481 residues: UDP-glycosyltransferase 71K2 (481 aa).

UDP-alpha-D-glucose-binding positions include serine 285, 350-351 (WA), 368-376 (HCGWNSILE), and 390-393 (YAEQ).

It belongs to the UDP-glycosyltransferase family.

In terms of biological role, glycosyltransferase that possesses chalcone and flavonol 2'-O-glycosyltransferase activity. Converts phloretin to phlorizin (phloretin 2'-O-glucoside), a potent antioxidant. Possesses glycosyltransferase activity toward quercetin, isoliquiritigenin, butein and caffeic acid. In Pyrus communis (Pear), this protein is UDP-glycosyltransferase 71K2.